A 197-amino-acid chain; its full sequence is dITP/XTP pyrophosphatase (197 aa).

9 to 14 (SNNAGK) contacts substrate. Residue Asp70 is the Proton acceptor of the active site. Position 70 (Asp70) interacts with Mg(2+). Residues Ser71, 153 to 156 (FGYD), Lys176, and 181 to 182 (HR) each bind substrate.

It belongs to the HAM1 NTPase family. In terms of assembly, homodimer. Mg(2+) is required as a cofactor.

The catalysed reaction is XTP + H2O = XMP + diphosphate + H(+). It carries out the reaction dITP + H2O = dIMP + diphosphate + H(+). It catalyses the reaction ITP + H2O = IMP + diphosphate + H(+). Functionally, pyrophosphatase that catalyzes the hydrolysis of nucleoside triphosphates to their monophosphate derivatives, with a high preference for the non-canonical purine nucleotides XTP (xanthosine triphosphate), dITP (deoxyinosine triphosphate) and ITP. Seems to function as a house-cleaning enzyme that removes non-canonical purine nucleotides from the nucleotide pool, thus preventing their incorporation into DNA/RNA and avoiding chromosomal lesions. The chain is dITP/XTP pyrophosphatase from Chromobacterium violaceum (strain ATCC 12472 / DSM 30191 / JCM 1249 / CCUG 213 / NBRC 12614 / NCIMB 9131 / NCTC 9757 / MK).